Here is a 729-residue protein sequence, read N- to C-terminus: Catalase-peroxidase (729 aa).

Positions 1–26 (MTMDQKTDNAGKCPVAHTAPRGRSNR) are disordered. The segment at residues 97-219 (WHSAGTYRIT…LAAVQMGLIY (123 aa)) is a cross-link (tryptophyl-tyrosyl-methioninium (Trp-Tyr) (with M-245)). The Proton acceptor role is filled by His98. Residues 219 to 245 (YVNPEGPNGNPDPVAAAHDIRETFARM) constitute a cross-link (tryptophyl-tyrosyl-methioninium (Tyr-Met) (with W-97)). His260 contributes to the heme b binding site.

This sequence belongs to the peroxidase family. Peroxidase/catalase subfamily. In terms of assembly, homodimer or homotetramer. It depends on heme b as a cofactor. Post-translationally, formation of the three residue Trp-Tyr-Met cross-link is important for the catalase, but not the peroxidase activity of the enzyme.

The catalysed reaction is H2O2 + AH2 = A + 2 H2O. It catalyses the reaction 2 H2O2 = O2 + 2 H2O. Its function is as follows. Bifunctional enzyme with both catalase and broad-spectrum peroxidase activity. In Sinorhizobium medicae (strain WSM419) (Ensifer medicae), this protein is Catalase-peroxidase.